Here is a 185-residue protein sequence, read N- to C-terminus: Iron-sulfur assembly protein 2 (185 aa).

3 residues coordinate Fe cation: Cys89, Cys175, and Cys177.

Belongs to the HesB/IscA family.

Its subcellular location is the mitochondrion matrix. Functionally, involved in the assembly of mitochondrial and cytoplasmic iron-sulfur proteins. Probably involved in the binding of an intermediate of Fe/S cluster assembly. The polypeptide is Iron-sulfur assembly protein 2 (ISA2) (Saccharomyces cerevisiae (strain ATCC 204508 / S288c) (Baker's yeast)).